Reading from the N-terminus, the 610-residue chain is E-selectin (610 aa).

The first 21 residues, 1–21, serve as a signal peptide directing secretion; that stretch reads MIASQFLSALTLVLLIKESGA. The C-type lectin domain maps to 22-139; it reads WSYNTSTEAM…CSKKKLALCY (118 aa). The Extracellular segment spans residues 22-556; the sequence is WSYNTSTEAM…CEAPTESNIP (535 aa). Asn25 carries an N-linked (GlcNAc...) asparagine glycan. Cystine bridges form between Cys40–Cys138, Cys111–Cys130, Cys143–Cys154, Cys148–Cys163, and Cys165–Cys174. The Ca(2+) site is built by Glu101, Asn103, and Glu109. A carbohydrate is bound by residues 101 to 109, 113 to 118, and 126 to 128; these read EPNNRQKDE, EIYIKR, and NDE. Residues Asn126 and Asp127 each contribute to the Ca(2+) site. In terms of domain architecture, EGF-like spans 140 to 175; sequence TAACTNTSCSGHGECVETINNYTCKCDPGFSGLKCE. N-linked (GlcNAc...) asparagine glycans are attached at residues Asn145 and Asn160. 6 consecutive Sushi domains span residues 178–239, 240–301, 303–364, 366–427, 429–490, and 491–549; these read VNCT…ACNV, VECD…TCKA, TCRA…VCEA, QCTA…TCEA, RCDA…SCQV, and VKCS…TCEA. Asn179, Asn199, and Asn203 each carry an N-linked (GlcNAc...) asparagine glycan. Disulfide bonds link Cys180–Cys224, Cys193–Cys206, Cys210–Cys237, Cys242–Cys286, Cys255–Cys268, Cys272–Cys299, Cys304–Cys349, Cys335–Cys362, Cys367–Cys412, Cys398–Cys425, Cys430–Cys475, Cys461–Cys488, Cys493–Cys534, and Cys520–Cys547. N-linked (GlcNAc...) asparagine glycosylation occurs at Asn265. Residues Asn312 and Asn332 are each glycosylated (N-linked (GlcNAc...) asparagine). N-linked (GlcNAc...) asparagine glycans are attached at residues Asn503 and Asn527. A helical transmembrane segment spans residues 557 to 578; it reads LVAGLSAAGLSLLTLAPFLLWL. At 579 to 610 the chain is on the cytoplasmic side; sequence RKCLRKAKKFVPASSCQSLESDGSYQKPSYIL.

This sequence belongs to the selectin/LECAM family. As to quaternary structure, interacts with SELPLG/PSGL1 and PODXL2 through the sialyl Lewis X epitope. SELPLG sulfation appears not to be required for this interaction.

Its subcellular location is the cell membrane. In terms of biological role, cell-surface glycoprotein having a role in immunoadhesion. Mediates in the adhesion of blood neutrophils in cytokine-activated endothelium through interaction with SELPLG/PSGL1. May have a role in capillary morphogenesis. The chain is E-selectin (SELE) from Homo sapiens (Human).